A 109-amino-acid chain; its full sequence is UPF0449 protein C19orf25 homolog (109 aa).

Tyr63 carries the post-translational modification Phosphotyrosine.

This sequence belongs to the UPF0449 family.

This Rattus norvegicus (Rat) protein is UPF0449 protein C19orf25 homolog.